A 625-amino-acid polypeptide reads, in one-letter code: pH-response transcription factor pacC/RIM101 (625 aa).

A compositionally biased stretch (low complexity) spans 1-34 (MSSQDQQQQQQPAQTQTSTSSSSNNENATTATSS). A disordered region spans residues 1 to 35 (MSSQDQQQQQQPAQTQTSTSSSSNNENATTATSSI). 3 consecutive C2H2-type zinc fingers follow at residues 45-70 (LLCQ…CEKH), 81-105 (LTCG…IRVH), and 111-133 (HKCE…VKTH). Residues 391 to 416 (APMTATHSSHSVSSGTPALTPPSSSV) show a composition bias toward polar residues. Residues 391–440 (APMTATHSSHSVSSGTPALTPPSSSVSYTSGNSPMSSSGMSPISRHSSTS) are disordered. Over residues 417-438 (SYTSGNSPMSSSGMSPISRHSS) the composition is skewed to low complexity. The short motif at 444 to 447 (YPNL) is the YPX[LI] motif 1 element. Disordered stretches follow at residues 455-543 (SPHH…SPSV) and 584-625 (VKDE…DDDE). Composition is skewed to polar residues over residues 461–472 (TAPTSTLGTNFD) and 490–514 (GLNS…SPKE). The short motif at 615-618 (YPVL) is the YPX[LI] motif 2 element.

Belongs to the pacC/RIM101 family. Post-translationally, activated by C-terminal proteolytic cleavage by signaling protease (probably palB/RIM13) at neutral to alkaline ambient pH.

Its subcellular location is the cytoplasm. The protein localises to the nucleus. Transcription factor that mediates regulation of both acid- and alkaline-expressed genes in response to ambient pH. At alkaline ambient pH, activates transcription of alkaline-expressed genes (including pac1 itself) and represses transcription of acid-expressed genes. This is pH-response transcription factor pacC/RIM101 (pac1) from Sclerotinia sclerotiorum (White mold).